A 1457-amino-acid polypeptide reads, in one-letter code: Eye-specific diacylglycerol kinase (1457 aa).

3 disordered regions span residues 1 to 123 (MQQQ…SSEA), 136 to 177 (RSHS…PPCI), and 207 to 339 (YSNT…QPTT). 3 stretches are compositionally biased toward low complexity: residues 22–62 (SATT…LRTT), 98–115 (SQRA…SSAS), and 141–154 (DSAT…DSGT). The segment covering 214–253 (ASEDEDEVEGHNAEEEEEGSAAIEDAEEETTEAATEEADE) has biased composition (acidic residues). Residues 254–266 (DPRTEVESEHDHD) show a composition bias toward basic and acidic residues. The segment covering 294–303 (RLPRQMRRHT) has biased composition (basic residues). Phorbol-ester/DAG-type zinc fingers lie at residues 591 to 641 (HYWK…TLAC) and 661 to 724 (HHWV…GEEC). Residues 758 to 799 (NNAASGSGGGGAGGGAGGGGGKSKKQTQRRQKGKEEKKEPRA) are disordered. Residues 763-778 (GSGGGGAGGGAGGGGG) are compositionally biased toward gly residues. A compositionally biased stretch (basic residues) spans 779-789 (KSKKQTQRRQK). The DAGKc domain maps to 808–944 (PEVIPVIVFI…MDRWRVKVTP (137 aa)). A disordered region spans residues 1264-1302 (TPDQERSFAAFSQRQAQNERRQMDQAQGRGPGSTDEDLQ). 4 ANK repeats span residues 1320 to 1349 (QTSD…SLQS), 1353 to 1382 (NGQT…RRLI), 1389 to 1418 (LGQT…HLDT), and 1422 to 1451 (GGNT…TQPV).

Belongs to the eukaryotic diacylglycerol kinase family. In terms of tissue distribution, expressed specifically in adult eye.

The protein resides in the membrane. It catalyses the reaction a 1,2-diacyl-sn-glycerol + ATP = a 1,2-diacyl-sn-glycero-3-phosphate + ADP + H(+). Required for the maintenance of phospholipid turnover within the photoreceptor. This Drosophila melanogaster (Fruit fly) protein is Eye-specific diacylglycerol kinase (rdgA).